Here is a 143-residue protein sequence, read N- to C-terminus: Probable cyclic pyranopterin monophosphate synthase (143 aa).

Residues 61 to 63 and 97 to 98 contribute to the substrate site; these read YCH and ME. Asp112 is a catalytic residue.

Belongs to the MoaC family. Homohexamer; trimer of dimers.

The catalysed reaction is (8S)-3',8-cyclo-7,8-dihydroguanosine 5'-triphosphate = cyclic pyranopterin phosphate + diphosphate. The protein operates within cofactor biosynthesis; molybdopterin biosynthesis. In terms of biological role, catalyzes the conversion of (8S)-3',8-cyclo-7,8-dihydroguanosine 5'-triphosphate to cyclic pyranopterin monophosphate (cPMP). The chain is Probable cyclic pyranopterin monophosphate synthase from Thermoplasma acidophilum (strain ATCC 25905 / DSM 1728 / JCM 9062 / NBRC 15155 / AMRC-C165).